The chain runs to 226 residues: ATP synthase F(0) complex subunit a (226 aa).

Helical transmembrane passes span 13 to 33 (VILG…LISW), 69 to 89 (WALL…LGLL), 97 to 117 (TQLS…VIMA), 138 to 158 (IPVL…ALGV), 179 to 199 (FVLL…LFLL), and 201 to 221 (LLEI…LSLY).

It belongs to the ATPase A chain family. In terms of assembly, component of the ATP synthase complex composed at least of ATP5F1A/subunit alpha, ATP5F1B/subunit beta, ATP5MC1/subunit c (homooctomer), MT-ATP6/subunit a, MT-ATP8/subunit 8, ATP5ME/subunit e, ATP5MF/subunit f, ATP5MG/subunit g, ATP5MK/subunit k, ATP5MJ/subunit j, ATP5F1C/subunit gamma, ATP5F1D/subunit delta, ATP5F1E/subunit epsilon, ATP5PF/subunit F6, ATP5PB/subunit b, ATP5PD/subunit d, ATP5PO/subunit OSCP. ATP synthase complex consists of a soluble F(1) head domain (subunits alpha(3) and beta(3)) - the catalytic core - and a membrane F(0) domain - the membrane proton channel (subunits c, a, 8, e, f, g, k and j). These two domains are linked by a central stalk (subunits gamma, delta, and epsilon) rotating inside the F1 region and a stationary peripheral stalk (subunits F6, b, d, and OSCP). Interacts with DNAJC30; interaction is direct.

The protein localises to the mitochondrion inner membrane. The enzyme catalyses H(+)(in) = H(+)(out). In terms of biological role, subunit a, of the mitochondrial membrane ATP synthase complex (F(1)F(0) ATP synthase or Complex V) that produces ATP from ADP in the presence of a proton gradient across the membrane which is generated by electron transport complexes of the respiratory chain. ATP synthase complex consist of a soluble F(1) head domain - the catalytic core - and a membrane F(1) domain - the membrane proton channel. These two domains are linked by a central stalk rotating inside the F(1) region and a stationary peripheral stalk. During catalysis, ATP synthesis in the catalytic domain of F(1) is coupled via a rotary mechanism of the central stalk subunits to proton translocation. With the subunit c (ATP5MC1), forms the proton-conducting channel in the F(0) domain, that contains two crucial half-channels (inlet and outlet) that facilitate proton movement from the mitochondrial intermembrane space (IMS) into the matrix. Protons are taken up via the inlet half-channel and released through the outlet half-channel, following a Grotthuss mechanism. This Xenopus laevis (African clawed frog) protein is ATP synthase F(0) complex subunit a.